We begin with the raw amino-acid sequence, 455 residues long: Argininosuccinate lyase (455 aa).

The protein belongs to the lyase 1 family. Argininosuccinate lyase subfamily.

The protein resides in the cytoplasm. The enzyme catalyses 2-(N(omega)-L-arginino)succinate = fumarate + L-arginine. The protein operates within amino-acid biosynthesis; L-arginine biosynthesis; L-arginine from L-ornithine and carbamoyl phosphate: step 3/3. In Shewanella baltica (strain OS185), this protein is Argininosuccinate lyase.